A 251-amino-acid chain; its full sequence is Large ribosomal subunit protein uL3 (251 aa).

Residue Q151 is modified to N5-methylglutamine. Residues 221-251 (GLKQAANSNDSAAADTPAEVAAVEATEGQEG) are disordered. Over residues 225–251 (AANSNDSAAADTPAEVAAVEATEGQEG) the composition is skewed to low complexity.

The protein belongs to the universal ribosomal protein uL3 family. As to quaternary structure, part of the 50S ribosomal subunit. Forms a cluster with proteins L14 and L19. Methylated by PrmB.

In terms of biological role, one of the primary rRNA binding proteins, it binds directly near the 3'-end of the 23S rRNA, where it nucleates assembly of the 50S subunit. The polypeptide is Large ribosomal subunit protein uL3 (Novosphingobium aromaticivorans (strain ATCC 700278 / DSM 12444 / CCUG 56034 / CIP 105152 / NBRC 16084 / F199)).